A 186-amino-acid polypeptide reads, in one-letter code: dCTP deaminase (186 aa).

107–112 is a binding site for dCTP; it reads KSTYAR. The active-site Proton donor/acceptor is the glutamate 133. DCTP contacts are provided by glutamine 152, tyrosine 166, and glutamine 176.

Belongs to the dCTP deaminase family. Homotrimer.

The catalysed reaction is dCTP + H2O + H(+) = dUTP + NH4(+). It participates in pyrimidine metabolism; dUMP biosynthesis; dUMP from dCTP (dUTP route): step 1/2. Its function is as follows. Catalyzes the deamination of dCTP to dUTP. The protein is dCTP deaminase of Campylobacter jejuni subsp. jejuni serotype O:6 (strain 81116 / NCTC 11828).